A 962-amino-acid polypeptide reads, in one-letter code: Protease 3 (962 aa).

The first 23 residues, 1-23 (MPRSIWFKALLLFVALWAPLSQA), serve as a signal peptide directing secretion. Position 88 (histidine 88) interacts with Zn(2+). Glutamate 91 (proton acceptor) is an active-site residue. Positions 92 and 169 each coordinate Zn(2+).

The protein belongs to the peptidase M16 family. As to quaternary structure, monomer. Requires Zn(2+) as cofactor.

It localises to the periplasm. It catalyses the reaction Preferential cleavage of 16-Tyr-|-Leu-17 and 25-Phe-|-Tyr-26 bonds of oxidized insulin B chain. Also acts on other substrates of Mw less than 7 kDa such as insulin and glucagon.. Functionally, endopeptidase that degrades small peptides of less than 7 kDa, such as glucagon and insulin. The polypeptide is Protease 3 (ptrA) (Escherichia coli O6:H1 (strain CFT073 / ATCC 700928 / UPEC)).